We begin with the raw amino-acid sequence, 838 residues long: MLGLLKKVVGDPSQRQLKKNQKIADQVEALSDEMKSLSDDGLRQKTEEFKKRYKNGESLDDLLPEAYAVVREAATRVLNMTPYPVQILGAIALHQGNIAEMKTGEGKTLVGTMPVYLNALAGKGVHVVTVNDYLARRDSEQMGAMFEFLGLTVGLNVPGLSKEEKKEAYQADITYGTNNEFGFDYLRDNMVLYKEQMVQRSLNFALVDEVDSILIDEARTPLIISGSVERSTKLYSQANSFVRVLKNEEDYTLDEKTKSVQLTEEGVNKAERAFNIDNLFDQRHVQLLHHINQAMKAHVVMHRDADYVVENGEIVIVDQFTGRLMKGRRYSDGLHQAIEAKEGLQIQRESMTLASITFQNYFRMYQKLAGMTGTAKTEEEEFRNIYGMDVMVIPTNKPVIRDDRPDLIFKTMDAKFKAVVNEIEELYKKGQPVLVGTVSVETSELVSTLLKKRRIPHHVLNAKNHEKEAEIIENAGHRGAVTIATNMAGRGTDIKLGEGVRELGGLHVLGTERHESRRIDNQLRGRSGRQGDPGSSQFYLSMEDELMRRFGSDNMRAMMDKLGMEEDQPIESKLVSRAVETAQKRVEGNNFDARKQILQYDDVMREQREIIYKQRMEVLESDNLREIVEKMILSVIERNVQLHTPESEVPEDWDYGAIVNFMKANLLNEDDLTEKDIWGKDPEEIVEIIYDKVIERYNKKEEEFTPEHMREFEKVIMLRTVDRKWMNHIDQMDQLRQGIHLRAYGQNDPLREYRFEGFEMFEAMVASIEEEVAMYVMKAQVQQNLQREKVAEGQAVQPKPTDGDSKAKRQPVRKKETVGRNEPCPCGSGKKYKNCCGQ.

ATP contacts are provided by residues glutamine 86, 104-108 (GEGKT), and aspartate 493. Disordered regions lie at residues 517–536 (RRIDNQLRGRSGRQGDPGSS) and 789–838 (KVAE…CCGQ). Over residues 801–819 (TDGDSKAKRQPVRKKETVG) the composition is skewed to basic and acidic residues. Zn(2+)-binding residues include cysteine 824, cysteine 826, cysteine 835, and cysteine 836.

It belongs to the SecA family. In terms of assembly, monomer and homodimer. Part of the essential Sec protein translocation apparatus which comprises SecA, SecYEG and auxiliary proteins SecDF. Other proteins may also be involved. It depends on Zn(2+) as a cofactor.

It localises to the cell membrane. It is found in the cytoplasm. The catalysed reaction is ATP + H2O + cellular proteinSide 1 = ADP + phosphate + cellular proteinSide 2.. Part of the Sec protein translocase complex. Interacts with the SecYEG preprotein conducting channel. Has a central role in coupling the hydrolysis of ATP to the transfer of proteins into and across the cell membrane, serving as an ATP-driven molecular motor driving the stepwise translocation of polypeptide chains across the membrane. This Halalkalibacterium halodurans (strain ATCC BAA-125 / DSM 18197 / FERM 7344 / JCM 9153 / C-125) (Bacillus halodurans) protein is Protein translocase subunit SecA.